We begin with the raw amino-acid sequence, 305 residues long: Transcription factor MYB87 (305 aa).

2 HTH myb-type domains span residues 9 to 66 (KMAV…RPNL) and 67 to 117 (KHGG…KKKL). 2 DNA-binding regions (H-T-H motif) span residues 38–62 (WISLPQRIGIKRCGKSCRLRWLNYL) and 90–113 (WSIIASQLPGRTDNDIKNYWNTRL).

As to expression, expressed in roots, leaves, internodes, shoot tips and flowers.

It is found in the nucleus. Its function is as follows. Transcription factor that functions as a regulator of genes affecting cell wall organization and remodeling. Activates genes related to the primary cell wall and represses genes related to the secondary cell wall and expansins. Required for the regulation of longitudinal cell growth in stems, leaves, petioles, roots, flowers and siliques. The sequence is that of Transcription factor MYB87 from Arabidopsis thaliana (Mouse-ear cress).